Here is a 122-residue protein sequence, read N- to C-terminus: Large ribosomal subunit protein uL14 (122 aa).

Belongs to the universal ribosomal protein uL14 family. Part of the 50S ribosomal subunit. Forms a cluster with proteins L3 and L19. In the 70S ribosome, L14 and L19 interact and together make contacts with the 16S rRNA in bridges B5 and B8.

Its function is as follows. Binds to 23S rRNA. Forms part of two intersubunit bridges in the 70S ribosome. The protein is Large ribosomal subunit protein uL14 of Chlamydia abortus (strain DSM 27085 / S26/3) (Chlamydophila abortus).